Here is a 275-residue protein sequence, read N- to C-terminus: Ceramide synthase (275 aa).

One can recognise a TLC domain in the interval Ala-34 to Arg-261. 4 helical membrane-spanning segments follow: residues Phe-130–Trp-150, Leu-159–Ile-179, Ala-194–Ala-214, and Ala-232–Ile-252.

Each isoform has a distinct expression pattern. Isoform 1 is highly expressed in brain. Isoform 2 is expressed at low levels, if any, in all analyzed tissues, with slightly higher levels in testis. Isoform 3 is expressed at very high levels in testis and, at lower levels, in white adipose tissue. In epididymal fat, isoform 3 is expressed at higher levels in obese mice compared with lean mice. By contrast, isoform 1 and 2 levels are significantly lower in obese mice compared with lean mice.

The protein localises to the golgi apparatus membrane. It localises to the endoplasmic reticulum membrane. It carries out the reaction sphing-4-enine + octadecanoyl-CoA = N-octadecanoylsphing-4-enine + CoA + H(+). It catalyses the reaction eicosanoyl-CoA + sphing-4-enine = N-eicosanoyl-sphing-4-enine + CoA + H(+). The catalysed reaction is sphing-4-enine + hexadecanoyl-CoA = N-hexadecanoylsphing-4-enine + CoA + H(+). Functionally, involved in ceramide synthesis. In vitro, isoform 3 stimulates the production of C16-, C18- and C20-ceramides, isoform 1 slightly increases the levels of C18- and C20-ceramides, while isoform 2 exhibits only minimal activity. May interfere with adipogenesis by stimulating ceramide synthesis. This chain is Ceramide synthase (Tlcd3b), found in Mus musculus (Mouse).